Reading from the N-terminus, the 116-residue chain is Large ribosomal subunit protein bL17 (116 aa).

The protein belongs to the bacterial ribosomal protein bL17 family. As to quaternary structure, part of the 50S ribosomal subunit. Contacts protein L32.

This chain is Large ribosomal subunit protein bL17, found in Helicobacter pylori (strain P12).